We begin with the raw amino-acid sequence, 247 residues long: MSEATTTLDGWYCLHDLRSIDWAAWKTLSSDERGQAVSEFLNVVEKWNDVAAAKKGSHAMYTVVGQKADIMLMILRPTMEELNEIETELNKTTLAEYMVPAYSYVSVVELSNYLPADEDPYQNPQILARLYPELPKANHICFYPMDKRRQGDDNWYMLPMEERKKMMYSHSKIGRQYAGKVRQVISGSVGFDDFEWGVTLFADDVLQFKKLIYEMRFDEVSARYGEFGTFFVGNILPDEKVEKFLHI.

Fe-coproporphyrin III contacts are provided by residues arginine 129, tyrosine 143 to lysine 147, histidine 170, glutamine 183, and serine 221. The active site involves tyrosine 143.

The protein belongs to the ChdC family. Type 1 subfamily. Fe-coproporphyrin III serves as cofactor.

The catalysed reaction is Fe-coproporphyrin III + 2 H2O2 + 2 H(+) = heme b + 2 CO2 + 4 H2O. It carries out the reaction Fe-coproporphyrin III + H2O2 + H(+) = harderoheme III + CO2 + 2 H2O. The enzyme catalyses harderoheme III + H2O2 + H(+) = heme b + CO2 + 2 H2O. The protein operates within porphyrin-containing compound metabolism; protoheme biosynthesis. Involved in coproporphyrin-dependent heme b biosynthesis. Catalyzes the decarboxylation of Fe-coproporphyrin III (coproheme) to heme b (protoheme IX), the last step of the pathway. The reaction occurs in a stepwise manner with a three-propionate intermediate. In Bacillus anthracis, this protein is Coproheme decarboxylase.